Reading from the N-terminus, the 401-residue chain is uncharacterized protein (401 aa).

Transmembrane regions (helical) follow at residues 20 to 40 (FFGELLTSLTGAMMGPFMVLY), 49 to 69 (IMMPMLIISLQPFADIFLTLA), 83 to 100 (ILTALLLQSAAMTGFVFA), 104 to 121 (YVFAILYVMNGIGRSLYI), 140 to 160 (VFAVINAIYSTGLTAGPLVGM), 167 to 187 (PVWIFALDAAALFIYFLIAAL), 207 to 227 (FTIYRPVLLLLLLSLPISMLY), 248 to 268 (MLTIYSAAKALFSCVLQVPLV), 289 to 309 (LAAAGFACSTSLTMLLVTAAV), and 357 to 377 (GLILTSFGGEVIFYALAVCLL).

The protein belongs to the major facilitator superfamily.

It is found in the cell membrane. This is an uncharacterized protein from Bacillus subtilis (strain 168).